Consider the following 120-residue polypeptide: NAD(P)H-quinone oxidoreductase subunit 3, chloroplastic (120 aa).

3 helical membrane-spanning segments follow: residues 9–29, 64–84, and 88–108; these read IFWAFLIISSAIPFLAFLISG, MFALVFVVFDVETVFLYPWAM, and VLGVSAFIEAFIFVLILILGL.

Belongs to the complex I subunit 3 family. As to quaternary structure, NDH is composed of at least 16 different subunits, 5 of which are encoded in the nucleus.

The protein localises to the plastid. The protein resides in the chloroplast thylakoid membrane. The catalysed reaction is a plastoquinone + NADH + (n+1) H(+)(in) = a plastoquinol + NAD(+) + n H(+)(out). It carries out the reaction a plastoquinone + NADPH + (n+1) H(+)(in) = a plastoquinol + NADP(+) + n H(+)(out). Its function is as follows. NDH shuttles electrons from NAD(P)H:plastoquinone, via FMN and iron-sulfur (Fe-S) centers, to quinones in the photosynthetic chain and possibly in a chloroplast respiratory chain. The immediate electron acceptor for the enzyme in this species is believed to be plastoquinone. Couples the redox reaction to proton translocation, and thus conserves the redox energy in a proton gradient. The protein is NAD(P)H-quinone oxidoreductase subunit 3, chloroplastic of Aethionema cordifolium (Lebanon stonecress).